Here is a 66-residue protein sequence, read N- to C-terminus: Large ribosomal subunit protein bL35 (66 aa).

A disordered region spans residues 22 to 41; it reads VMSAQRGKRHGMIKRTKKQI. The segment covering 27 to 41 has biased composition (basic residues); the sequence is RGKRHGMIKRTKKQI.

The protein belongs to the bacterial ribosomal protein bL35 family.

The protein is Large ribosomal subunit protein bL35 of Rhodopseudomonas palustris (strain TIE-1).